We begin with the raw amino-acid sequence, 123 residues long: Large ribosomal subunit protein uL14 (123 aa).

The protein belongs to the universal ribosomal protein uL14 family. As to quaternary structure, part of the 50S ribosomal subunit. Forms a cluster with proteins L3 and L19. In the 70S ribosome, L14 and L19 interact and together make contacts with the 16S rRNA in bridges B5 and B8.

Binds to 23S rRNA. Forms part of two intersubunit bridges in the 70S ribosome. In Buchnera aphidicola subsp. Cinara cedri (strain Cc), this protein is Large ribosomal subunit protein uL14.